The primary structure comprises 180 residues: NAD(P)H-quinone oxidoreductase subunit 6, chloroplastic (180 aa).

Helical transmembrane passes span 10-30 (LLLA…VLLT), 32-52 (IIYS…FYII), 57-77 (FVAV…ILFA), 102-122 (IVCT…SWFG), and 153-173 (FLPF…AITI).

It belongs to the complex I subunit 6 family. In terms of assembly, NDH is composed of at least 16 different subunits, 5 of which are encoded in the nucleus.

The protein resides in the plastid. The protein localises to the chloroplast thylakoid membrane. It carries out the reaction a plastoquinone + NADH + (n+1) H(+)(in) = a plastoquinol + NAD(+) + n H(+)(out). The enzyme catalyses a plastoquinone + NADPH + (n+1) H(+)(in) = a plastoquinol + NADP(+) + n H(+)(out). In terms of biological role, NDH shuttles electrons from NAD(P)H:plastoquinone, via FMN and iron-sulfur (Fe-S) centers, to quinones in the photosynthetic chain and possibly in a chloroplast respiratory chain. The immediate electron acceptor for the enzyme in this species is believed to be plastoquinone. Couples the redox reaction to proton translocation, and thus conserves the redox energy in a proton gradient. The polypeptide is NAD(P)H-quinone oxidoreductase subunit 6, chloroplastic (ndhG) (Cryptomeria japonica (Japanese cedar)).